The primary structure comprises 76 residues: MSSIFDKVKAIVVEQLGVDEEEVTMETSFEDLNADSLDIVELVMALEEEFDIEIPDEDAEKIKTIGSAVEYIKENQ.

The Carrier domain occupies 2–76 (SSIFDKVKAI…SAVEYIKENQ (75 aa)). An O-(pantetheine 4'-phosphoryl)serine modification is found at Ser36.

This sequence belongs to the acyl carrier protein (ACP) family. In terms of processing, 4'-phosphopantetheine is transferred from CoA to a specific serine of apo-ACP by AcpS. This modification is essential for activity because fatty acids are bound in thioester linkage to the sulfhydryl of the prosthetic group.

Its subcellular location is the cytoplasm. It participates in lipid metabolism; fatty acid biosynthesis. Carrier of the growing fatty acid chain in fatty acid biosynthesis. This is Acyl carrier protein from Heliobacterium modesticaldum (strain ATCC 51547 / Ice1).